Consider the following 329-residue polypeptide: MSMVEENRPFAQQLSNVYFTILSLFCFKLFVKISLAILSHFYIVKGNRKEAARIAAEFYGVTQGRGSWADRSPLHEAASQGRLLALRTLLSQGYNVNAVTIDHVTPLHEACLGDHVACARTLLQAGANVNAITIDGVTPLFNACSQGSTSCTELLLEYGAKPQLESCLPSPTHEAASKGHHECLEILISWGVDVDQDIPHLGTPLYVACMSQQFHCVRKLLYAGADVQKGKYWDTPLHAAAQQSCTEIVNLLLEFGADINAKNTDLLRPVDVATSNSLVERLLLQHEATPSSLCQLCRLCIRNYIGRPRLHLIPQLQLPTLLQNFLQYR.

6 ANK repeats span residues 69 to 98, 102 to 131, 135 to 164, 167 to 196, 200 to 229, and 232 to 261; these read ADRS…NVNA, DHVT…NVNA, DGVT…KPQL, CLPS…DVDQ, HLGT…DVQK, and YWDT…DINA. The region spanning 278–329 is the SOCS box domain; that stretch reads LVERLLLQHEATPSSLCQLCRLCIRNYIGRPRLHLIPQLQLPTLLQNFLQYR.

It belongs to the ankyrin SOCS box (ASB) family.

The protein operates within protein modification; protein ubiquitination. In terms of biological role, may be a substrate-recognition component of a SCF-like ECS (Elongin-Cullin-SOCS-box protein) E3 ubiquitin-protein ligase complex which mediates the ubiquitination and subsequent proteasomal degradation of target proteins. May play a role in the initiation of arteriogenesis. This Bos taurus (Bovine) protein is Ankyrin repeat and SOCS box protein 5 (ASB5).